Here is a 378-residue protein sequence, read N- to C-terminus: tRNA-specific 2-thiouridylase MnmA (378 aa).

Residues alanine 14–serine 21 and leucine 40 each bind ATP. Cysteine 109 acts as the Nucleophile in catalysis. Cysteine 109 and cysteine 208 form a disulfide bridge. Glycine 133 is a binding site for ATP. Residues lysine 156–glutamine 158 are interaction with tRNA. Cysteine 208 acts as the Cysteine persulfide intermediate in catalysis.

It belongs to the MnmA/TRMU family.

It is found in the cytoplasm. The enzyme catalyses S-sulfanyl-L-cysteinyl-[protein] + uridine(34) in tRNA + AH2 + ATP = 2-thiouridine(34) in tRNA + L-cysteinyl-[protein] + A + AMP + diphosphate + H(+). Functionally, catalyzes the 2-thiolation of uridine at the wobble position (U34) of tRNA, leading to the formation of s(2)U34. This Streptomyces griseus subsp. griseus (strain JCM 4626 / CBS 651.72 / NBRC 13350 / KCC S-0626 / ISP 5235) protein is tRNA-specific 2-thiouridylase MnmA.